Reading from the N-terminus, the 266-residue chain is Thymidylate synthase (266 aa).

DUMP is bound by residues Arg20 and 129–130 (RR). Cys149 functions as the Nucleophile in the catalytic mechanism. Residues 169–172 (RSCD), Asn180, and 210–212 (HVY) contribute to the dUMP site. Position 172 (Asp172) interacts with (6R)-5,10-methylene-5,6,7,8-tetrahydrofolate. Ala265 lines the (6R)-5,10-methylene-5,6,7,8-tetrahydrofolate pocket.

Belongs to the thymidylate synthase family. Bacterial-type ThyA subfamily. In terms of assembly, homodimer.

It localises to the cytoplasm. It carries out the reaction dUMP + (6R)-5,10-methylene-5,6,7,8-tetrahydrofolate = 7,8-dihydrofolate + dTMP. It functions in the pathway pyrimidine metabolism; dTTP biosynthesis. Its function is as follows. Catalyzes the reductive methylation of 2'-deoxyuridine-5'-monophosphate (dUMP) to 2'-deoxythymidine-5'-monophosphate (dTMP) while utilizing 5,10-methylenetetrahydrofolate (mTHF) as the methyl donor and reductant in the reaction, yielding dihydrofolate (DHF) as a by-product. This enzymatic reaction provides an intracellular de novo source of dTMP, an essential precursor for DNA biosynthesis. The chain is Thymidylate synthase from Bifidobacterium longum (strain NCC 2705).